We begin with the raw amino-acid sequence, 484 residues long: Glutamate--tRNA ligase (484 aa).

The 'HIGH' region motif lies at 11-21 (PSPTGYLHIGN). A 'KMSKS' region motif is present at residues 252-256 (KLSKR). K255 lines the ATP pocket.

It belongs to the class-I aminoacyl-tRNA synthetase family. Glutamate--tRNA ligase type 1 subfamily. As to quaternary structure, monomer.

The protein resides in the cytoplasm. It catalyses the reaction tRNA(Glu) + L-glutamate + ATP = L-glutamyl-tRNA(Glu) + AMP + diphosphate. Functionally, catalyzes the attachment of glutamate to tRNA(Glu) in a two-step reaction: glutamate is first activated by ATP to form Glu-AMP and then transferred to the acceptor end of tRNA(Glu). The chain is Glutamate--tRNA ligase from Staphylococcus epidermidis (strain ATCC 35984 / DSM 28319 / BCRC 17069 / CCUG 31568 / BM 3577 / RP62A).